The following is a 336-amino-acid chain: Serpentine receptor class gamma-9 (336 aa).

Helical transmembrane passes span 30–50 (LLQAAYMVPPAFLYARILYVI), 64–84 (FVIYSMDSIVGFILLLLDIFI), 111–131 (IYYPLLNYLHCAQPLIQIFLT), 152–172 (LSFIVAFVSLSPFLIIWNTII), 200–220 (FLFLVRSVAVIITVASTVIMF), 237–257 (LCLACVIHSICFMVPSFFEAL), and 271–291 (FLIQPFAWDVLNVGSPLIMIF).

The protein belongs to the nematode receptor-like protein srg family.

Its subcellular location is the membrane. The sequence is that of Serpentine receptor class gamma-9 (srg-9) from Caenorhabditis elegans.